Consider the following 212-residue polypeptide: Glycerol-3-phosphate acyltransferase (212 aa).

4 helical membrane-spanning segments follow: residues 3–23, 78–98, 115–135, and 155–177; these read ILLA…VVVS, DVAV…PVFF, AVHP…AFFF, and FLFG…LLVW.

The protein belongs to the PlsY family. Probably interacts with PlsX.

It is found in the cell inner membrane. The enzyme catalyses an acyl phosphate + sn-glycerol 3-phosphate = a 1-acyl-sn-glycero-3-phosphate + phosphate. It functions in the pathway lipid metabolism; phospholipid metabolism. In terms of biological role, catalyzes the transfer of an acyl group from acyl-phosphate (acyl-PO(4)) to glycerol-3-phosphate (G3P) to form lysophosphatidic acid (LPA). This enzyme utilizes acyl-phosphate as fatty acyl donor, but not acyl-CoA or acyl-ACP. The protein is Glycerol-3-phosphate acyltransferase of Burkholderia ambifaria (strain ATCC BAA-244 / DSM 16087 / CCUG 44356 / LMG 19182 / AMMD) (Burkholderia cepacia (strain AMMD)).